The chain runs to 153 residues: Small ribosomal subunit protein eS19 (153 aa).

Disordered stretches follow at residues 77–99 and 113–139; these read YGTS…KGSG and GYVE…TAGD. Residues 120-133 show a composition bias toward basic and acidic residues; it reads NDGRRVTGDGRSLL.

The protein belongs to the eukaryotic ribosomal protein eS19 family. In terms of assembly, part of the 30S ribosomal subunit.

Functionally, may be involved in maturation of the 30S ribosomal subunit. The chain is Small ribosomal subunit protein eS19 from Haloarcula marismortui (strain ATCC 43049 / DSM 3752 / JCM 8966 / VKM B-1809) (Halobacterium marismortui).